Consider the following 286-residue polypeptide: Phosphatidylserine decarboxylase proenzyme (286 aa).

Residues aspartate 90, histidine 147, and serine 253 each act as charge relay system; for autoendoproteolytic cleavage activity in the active site. Serine 253 acts as the Schiff-base intermediate with substrate; via pyruvic acid; for decarboxylase activity in catalysis. A Pyruvic acid (Ser); by autocatalysis modification is found at serine 253.

It belongs to the phosphatidylserine decarboxylase family. PSD-B subfamily. Prokaryotic type I sub-subfamily. As to quaternary structure, heterodimer of a large membrane-associated beta subunit and a small pyruvoyl-containing alpha subunit. Pyruvate is required as a cofactor. Post-translationally, is synthesized initially as an inactive proenzyme. Formation of the active enzyme involves a self-maturation process in which the active site pyruvoyl group is generated from an internal serine residue via an autocatalytic post-translational modification. Two non-identical subunits are generated from the proenzyme in this reaction, and the pyruvate is formed at the N-terminus of the alpha chain, which is derived from the carboxyl end of the proenzyme. The autoendoproteolytic cleavage occurs by a canonical serine protease mechanism, in which the side chain hydroxyl group of the serine supplies its oxygen atom to form the C-terminus of the beta chain, while the remainder of the serine residue undergoes an oxidative deamination to produce ammonia and the pyruvoyl prosthetic group on the alpha chain. During this reaction, the Ser that is part of the protease active site of the proenzyme becomes the pyruvoyl prosthetic group, which constitutes an essential element of the active site of the mature decarboxylase.

It is found in the cell membrane. It catalyses the reaction a 1,2-diacyl-sn-glycero-3-phospho-L-serine + H(+) = a 1,2-diacyl-sn-glycero-3-phosphoethanolamine + CO2. It functions in the pathway phospholipid metabolism; phosphatidylethanolamine biosynthesis; phosphatidylethanolamine from CDP-diacylglycerol: step 2/2. Catalyzes the formation of phosphatidylethanolamine (PtdEtn) from phosphatidylserine (PtdSer). The sequence is that of Phosphatidylserine decarboxylase proenzyme from Pseudoalteromonas atlantica (strain T6c / ATCC BAA-1087).